Reading from the N-terminus, the 368-residue chain is Quinolinate synthase (368 aa).

Iminosuccinate-binding residues include His46 and Ser63. Cys110 is a binding site for [4Fe-4S] cluster. Iminosuccinate-binding positions include 141-143 (YVN) and Ser162. Cys230 contacts [4Fe-4S] cluster. Residues 256–258 (HPE) and Thr273 contribute to the iminosuccinate site. Cys320 contacts [4Fe-4S] cluster.

It belongs to the quinolinate synthase family. Type 3 subfamily. As to quaternary structure, homotrimer. Requires [4Fe-4S] cluster as cofactor.

The protein localises to the cytoplasm. It catalyses the reaction iminosuccinate + dihydroxyacetone phosphate = quinolinate + phosphate + 2 H2O + H(+). The protein operates within cofactor biosynthesis; NAD(+) biosynthesis; quinolinate from iminoaspartate: step 1/1. Catalyzes the condensation of iminoaspartate with dihydroxyacetone phosphate to form quinolinate. The sequence is that of Quinolinate synthase from Bacillus subtilis (strain 168).